Reading from the N-terminus, the 272-residue chain is uncharacterized protein (272 aa).

Basic and acidic residues-rich tracts occupy residues 136-156 and 231-240; these read VRRE…HIDI and GCKESRRNEP. Disordered stretches follow at residues 136–157 and 174–272; these read VRRE…IDIH and VKPK…WAAF. Over residues 243-252 the composition is skewed to polar residues; the sequence is DLSQLKKNLP. The span at 253–272 shows a compositional bias: low complexity; the sequence is STAGSGSSKSTGAASGWAAF.

This is an uncharacterized protein from Arabidopsis thaliana (Mouse-ear cress).